The following is a 338-amino-acid chain: D-erythrose-4-phosphate dehydrogenase (338 aa).

12 to 13 provides a ligand contact to NAD(+); it reads RI. Residues 154-156, Arg200, 213-214, and Arg236 contribute to the substrate site; these read SCT and TK. Cys155 functions as the Nucleophile in the catalytic mechanism. Asn318 lines the NAD(+) pocket.

This sequence belongs to the glyceraldehyde-3-phosphate dehydrogenase family. Epd subfamily. Homotetramer.

It localises to the cytoplasm. The catalysed reaction is D-erythrose 4-phosphate + NAD(+) + H2O = 4-phospho-D-erythronate + NADH + 2 H(+). It participates in cofactor biosynthesis; pyridoxine 5'-phosphate biosynthesis; pyridoxine 5'-phosphate from D-erythrose 4-phosphate: step 1/5. Its function is as follows. Catalyzes the NAD-dependent conversion of D-erythrose 4-phosphate to 4-phosphoerythronate. The polypeptide is D-erythrose-4-phosphate dehydrogenase (Tolumonas auensis (strain DSM 9187 / NBRC 110442 / TA 4)).